Here is a 120-residue protein sequence, read N- to C-terminus: MAKVLFSLFSFLFLIIGVSAQFQFFEQMFNGQQQQHQRQPQDVPSDSQWYQDNYDRAHCTSYLCPGTLSCVAFPHHCPCAHPTYEEKFELADGNAICISKGGFKAGEAARKVELARKGLI.

The signal sequence occupies residues 1-20 (MAKVLFSLFSFLFLIIGVSA).

It belongs to the LCL2 family.

Functionally, probable component of the endoplasmic reticulum-associated degradation (ERAD) pathway. The protein is Long chronological lifespan protein 2 (lcl2) of Botryotinia fuckeliana (strain B05.10) (Noble rot fungus).